Consider the following 289-residue polypeptide: NAC domain-containing protein 2 (289 aa).

The region spanning 7–158 (LPPGFRFHPT…DWVLCRIYNK (152 aa)) is the NAC domain.

As to quaternary structure, interacts with KIN10 and KIN11.

Its subcellular location is the nucleus. This Arabidopsis thaliana (Mouse-ear cress) protein is NAC domain-containing protein 2 (NAC002).